A 364-amino-acid polypeptide reads, in one-letter code: Peptide chain release factor 2 (364 aa).

Glutamine 252 carries the post-translational modification N5-methylglutamine.

It belongs to the prokaryotic/mitochondrial release factor family. In terms of processing, methylated by PrmC. Methylation increases the termination efficiency of RF2.

It is found in the cytoplasm. Functionally, peptide chain release factor 2 directs the termination of translation in response to the peptide chain termination codons UGA and UAA. This is Peptide chain release factor 2 from Clostridium perfringens (strain SM101 / Type A).